The sequence spans 221 residues: MPVMRLFPCFLQLLAGLALPAVPPQQWALSAGNGSSEVEVVPFQEVWGRSYCRALERLVDVVSEYPSEVEHMFSPSCVSLLRCTGCCGDENLHCVPVETANVTMQLLKIRSGDRPSYVELTFSQHVRCECRHSPGRQSPDMPGDFRADAPSFLPPRRSLPMLFRMEWGCALTGSQSAVWPSSPVPEEIPRMHPGRNGKKQQRKPLREKMKPERCGDAVPRR.

The signal sequence occupies residues 1-18 (MPVMRLFPCFLQLLAGLA). Asparagine 33 is a glycosylation site (N-linked (GlcNAc...) asparagine). Disulfide bonds link cysteine 52–cysteine 94, cysteine 83–cysteine 128, and cysteine 87–cysteine 130. Residue asparagine 101 is glycosylated (N-linked (GlcNAc...) asparagine). A disordered region spans residues 175 to 221 (QSAVWPSSPVPEEIPRMHPGRNGKKQQRKPLREKMKPERCGDAVPRR). Residues 192-203 (HPGRNGKKQQRK) show a composition bias toward basic residues. The segment at 193-213 (PGRNGKKQQRKPLREKMKPER) is heparin-binding. Residues 204-221 (PLREKMKPERCGDAVPRR) show a composition bias toward basic and acidic residues.

The protein belongs to the PDGF/VEGF growth factor family. In terms of assembly, antiparallel homodimer; disulfide-linked. Also found as heterodimer with VEGFA/VEGF. Isoform PlGF-3 is found both as homodimer and as monomer. In terms of processing, N-glycosylated. While the three isoforms are present in most placental tissues, PlGF-2 is specific to early (8 week) placenta and only PlGF-1 is found in the colon and mammary carcinomas.

The protein resides in the secreted. In terms of biological role, growth factor active in angiogenesis and endothelial cell growth, stimulating their proliferation and migration. It binds to the receptor FLT1/VEGFR-1. Isoform PlGF-2 binds NRP1/neuropilin-1 and NRP2/neuropilin-2 in a heparin-dependent manner. Also promotes cell tumor growth. This Homo sapiens (Human) protein is Placenta growth factor (PGF).